The chain runs to 269 residues: Eukaryotic translation initiation factor 3 subunit G (269 aa).

The disordered stretch occupies residues 140-181 (AIGGGDMSAQGGSGSGRYVPPSLRAGARDPSSNAYQDQRERD). Over residues 141-154 (IGGGDMSAQGGSGS) the composition is skewed to gly residues. Residue Ser161 is modified to Phosphoserine. An RRM domain is found at 184–263 (KTIRLTQVNE…FMLHAEWSKP (80 aa)).

This sequence belongs to the eIF-3 subunit G family. Component of the eukaryotic translation initiation factor 3 (eIF-3) complex.

The protein localises to the cytoplasm. In terms of biological role, RNA-binding component of the eukaryotic translation initiation factor 3 (eIF-3) complex, which is involved in protein synthesis of a specialized repertoire of mRNAs and, together with other initiation factors, stimulates binding of mRNA and methionyl-tRNAi to the 40S ribosome. The eIF-3 complex specifically targets and initiates translation of a subset of mRNAs involved in cell proliferation. This subunit can bind 18S rRNA. This Kluyveromyces lactis (strain ATCC 8585 / CBS 2359 / DSM 70799 / NBRC 1267 / NRRL Y-1140 / WM37) (Yeast) protein is Eukaryotic translation initiation factor 3 subunit G.